The following is a 158-amino-acid chain: Cyclic pyranopterin monophosphate synthase (158 aa).

Residues 75-77 (LCH) and 113-114 (ME) contribute to the substrate site. Asp-128 is an active-site residue.

Belongs to the MoaC family. Homohexamer; trimer of dimers.

The enzyme catalyses (8S)-3',8-cyclo-7,8-dihydroguanosine 5'-triphosphate = cyclic pyranopterin phosphate + diphosphate. It functions in the pathway cofactor biosynthesis; molybdopterin biosynthesis. Catalyzes the conversion of (8S)-3',8-cyclo-7,8-dihydroguanosine 5'-triphosphate to cyclic pyranopterin monophosphate (cPMP). The sequence is that of Cyclic pyranopterin monophosphate synthase from Roseiflexus sp. (strain RS-1).